The chain runs to 8922 residues: Protein clarinet (8922 aa).

Positions 11–35 (SKGPPLEEVREESEEDAQVPEQVVS) are disordered. Residues 19–28 (VREESEEDAQ) show a composition bias toward acidic residues. Positions 385–405 (KDETKLILKSVEDKLETTEIE) form a coiled coil. Disordered stretches follow at residues 527-579 (QEAA…EPEL), 622-673 (IVIS…EPEL), 687-860 (LAEK…KEPE), 880-955 (SFEQ…EPEL), 971-1049 (EQSS…EPEL), 1062-1139 (SSAE…MESR), 1151-1331 (IARI…EPEL), 1347-1420 (EQSS…VMES), 1444-1520 (SFEQ…PELT), 1538-1619 (SFEQ…EEID), 1632-1710 (SFEQ…LTQE), 1726-1801 (SFEQ…VPEL), 1820-1898 (SFEQ…LTQE), 1939-1992 (VISE…LTQE), 2032-2084 (IVIS…SELT), 2126-2175 (IVIS…SKEP), 2194-2213 (QSSFEQASTITDRPPLPVRL), 2220-2246 (IVISEQHEGDRSSATPGADYERSYDQD), 2329-2403 (SFEQ…KKPE), 2423-2497 (SFEQ…KPEL), 2516-2594 (SFEQ…LTQE), 2610-2684 (SFEQ…KEPE), 2704-2845 (SFEQ…ERPF), 2892-2963 (SFEQ…MESK), 2983-3155 (EQSS…EPEL), 3171-3249 (EQSS…EPEL), 3268-3337 (SFEQ…PVML), 3619-3639 (SITPSEGDDGGSSETGHPTTD), 3995-4079 (AEPV…QEEI), 4117-4169 (IVIS…PELT), 4181-4271 (SLAE…STTI), 4557-4624 (QASA…TQEE), 4636-4656 (EQSSFEQASTIPDRPPLPVRL), 4666-4685 (SEQHEGDISSATSGADYERS), 4730-4801 (EQSS…GVTQ), 4855-4899 (PANP…PLQD), 5004-5036 (PEDFSEATSGADTESISETTANKKDSNDSNGLT), 5360-5379 (LAMFTNPSPSASPSLLRKES), 5390-5413 (RRSSGADSRASNDSSASRLPDTAL), 5484-5511 (KKQISSRTESTNSRVSSEGIDEEVENEV), 5540-5572 (PPIAISHPTPPHSAKTDTGSRHSSGSSAHSQFG), 6194-6303 (AEPV…ESES), 6354-6437 (DVES…GSRM), 6487-6510 (SSKSSTSLGTSAPTKSIPSPQIGI), 6577-6609 (ARFPPPSSQIPTRSPSVMSSSIMSELPPGLDDL), 6668-6691 (NAETDSSSSVITSRQPSRSPSVAR), 6728-6768 (AEFE…VPPG), 6998-7018 (TERKQREESPTRESGYATSTS), 7045-7098 (ARSR…DDFD), 7137-7175 (FDGDESELPHQDFVFNEPTTKKTSDFDFPKETDEVFEKP), 7202-7263 (EAPS…YPDR), 7313-7350 (KTTTSQTPSTSTKPTVTAPKRSDPIPIAPSQRSKEIEE), 7598-7623 (DSVRDDNERNENETTSPRGLKRSPGM), 7760-7797 (TRRHQHQQQHQAPVYITSSASRPPSAAGSNIFQESRPT), and 7842-7881 (HIRQPVSVRSPRAQTGTTQTTAASGSASNSIRPSIGSSSV). Residues 531-552 (SDNHEKERSSATSKADYERSFD) show a composition bias toward basic and acidic residues. Residues 760 to 776 (MESKEPELTQEEIDHIA) are compositionally biased toward basic and acidic residues. The span at 1062–1076 (SSAEQSSFEQASTVP) shows a compositional bias: low complexity. Residues 1230–1244 (MESKEPELTQEEIDH) are compositionally biased toward basic and acidic residues. The segment covering 1251 to 1261 (IAEQSSFEQAS) has biased composition (polar residues). Composition is skewed to basic and acidic residues over residues 1606–1619 (MESKEPELTQEEID) and 1700–1710 (MESKEPELTQE). Basic and acidic residues-rich tracts occupy residues 1888-1898 (MESKEPELTQE) and 1982-1992 (MESKESELTQE). Polar residues predominate over residues 2194–2204 (QSSFEQASTIT). The span at 2584–2594 (MESKEPELTQE) shows a compositional bias: basic and acidic residues. Residues 2772-2788 (MESKEPELTQEEIDHIA) show a composition bias toward basic and acidic residues. Residues 2793-2803 (LAEQSSFEQAS) are compositionally biased toward polar residues. A compositionally biased stretch (polar residues) spans 3076–3085 (APSSSFEQAS). Positions 4035 to 4044 (GTSFPDNAET) are enriched in polar residues. A compositionally biased stretch (basic and acidic residues) spans 4065–4079 (PVMKSKEPELTQEEI). Polar residues-rich tracts occupy residues 4182-4195 (LAEQSSFEQTSTIP), 4223-4234 (SATSGADYQQSF), and 4255-4271 (MESTQPELTQDHSSTTI). The segment covering 4571–4580 (IVEKREDDKS) has biased composition (basic and acidic residues). Over residues 4581 to 4594 (NITSGADYQQSFDQ) the composition is skewed to polar residues. The segment covering 4613-4624 (MESKEPELTQEE) has biased composition (basic and acidic residues). Residues 4636 to 4645 (EQSSFEQAST) are compositionally biased toward polar residues. A compositionally biased stretch (polar residues) spans 4730–4739 (EQSSFEQAST). A compositionally biased stretch (low complexity) spans 4871-4890 (EGSSSATSGADIPSSFDISS). The segment covering 5009–5023 (EATSGADTESISETT) has biased composition (polar residues). The segment covering 5390–5407 (RRSSGADSRASNDSSASR) has biased composition (low complexity). The span at 5486 to 5499 (QISSRTESTNSRVS) shows a compositional bias: polar residues. The segment covering 5540-5550 (PPIAISHPTPP) has biased composition (pro residues). Positions 5560–5572 (RHSSGSSAHSQFG) are enriched in low complexity. Composition is skewed to polar residues over residues 6225–6245 (ASSGASGSFDNNNAQVLTSGF) and 6270–6284 (KTVSPTPSADSMASR). Basic and acidic residues-rich tracts occupy residues 6285–6303 (KSSEYDIRSISEIRQESES) and 6376–6422 (GEGE…EESL). Residues 6494 to 6505 (LGTSAPTKSIPS) are compositionally biased toward polar residues. Residues 6590–6600 (SPSVMSSSIMS) show a composition bias toward low complexity. Over residues 6670–6687 (ETDSSSSVITSRQPSRSP) the composition is skewed to polar residues. Low complexity predominate over residues 6735 to 6747 (SQVPSRQPSRSPS). Composition is skewed to basic and acidic residues over residues 6998–7008 (TERKQREESPT) and 7045–7069 (ARSRRDSRDEVLHRREEDPEVHTPE). Over residues 7071–7086 (SSTAVVTDVPSVSPVT) the composition is skewed to low complexity. A compositionally biased stretch (basic and acidic residues) spans 7155–7175 (TTKKTSDFDFPKETDEVFEKP). Residues 7248 to 7260 (SDEESCSEDDEEY) show a composition bias toward acidic residues. A compositionally biased stretch (low complexity) spans 7313 to 7331 (KTTTSQTPSTSTKPTVTAP). Basic and acidic residues predominate over residues 7599–7609 (SVRDDNERNEN). Composition is skewed to low complexity over residues 7777 to 7788 (SSASRPPSAAGS) and 7854 to 7880 (AQTGTTQTTAASGSASNSIRPSIGSSS). Residues 7895–7915 (KKELKDVLIQRKQRLEATEIE) adopt a coiled-coil conformation. Residues 8510–8562 (SRRRAQETALTSSNKISTGSRSYARRPIRPSSYRNPEATNSMPDRHVARRTAE) are disordered. 2 stretches are compositionally biased toward polar residues: residues 8517–8530 (TALTSSNKISTGSR) and 8541–8551 (SYRNPEATNSM). Residues 8552–8562 (PDRHVARRTAE) show a composition bias toward basic and acidic residues. Residues 8570–8661 (RILLTRSYKH…EIEMVIRTYK (92 aa)) enclose the PDZ domain. The region spanning 8714–8835 (CHGHIQVSLG…SAINTGPRWY (122 aa)) is the C2 domain.

In terms of tissue distribution, expressed in the nervous system.

The protein resides in the synapse. Its subcellular location is the cell projection. It localises to the axon. Functionally, required for synapse development in the active zone of presynaptic terminals of specific neurons including serotonergic NSM neurons. The active zone is a protein-dense neuronal region within the presynaptic bouton, from which synaptic vesicles send neurotransmitter signals across the synapse. Plays a role in the recruitment and clustering of synaptic vesicles in the active zone of presynaptic terminals in serotonergic NSM neurons, and coordinates the release of synaptic vesicles at presynaptic terminals to regulate neurotransmission at neuromuscular junctions. Regulates synapse number in inhibitory motor neurons and plays a role in spontaneous postsynaptic synaptic vesicle release in muscle cells. The chain is Protein clarinet from Caenorhabditis elegans.